A 202-amino-acid chain; its full sequence is ATP-dependent Clp protease proteolytic subunit 1 (202 aa).

Catalysis depends on Ser-101, which acts as the Nucleophile. His-126 is a catalytic residue.

Belongs to the peptidase S14 family. As to quaternary structure, fourteen ClpP subunits assemble into 2 heptameric rings which stack back to back to give a disk-like structure with a central cavity, resembling the structure of eukaryotic proteasomes.

The protein resides in the cytoplasm. The catalysed reaction is Hydrolysis of proteins to small peptides in the presence of ATP and magnesium. alpha-casein is the usual test substrate. In the absence of ATP, only oligopeptides shorter than five residues are hydrolyzed (such as succinyl-Leu-Tyr-|-NHMec, and Leu-Tyr-Leu-|-Tyr-Trp, in which cleavage of the -Tyr-|-Leu- and -Tyr-|-Trp bonds also occurs).. Cleaves peptides in various proteins in a process that requires ATP hydrolysis. Has a chymotrypsin-like activity. Plays a major role in the degradation of misfolded proteins. The sequence is that of ATP-dependent Clp protease proteolytic subunit 1 from Rhizobium etli (strain ATCC 51251 / DSM 11541 / JCM 21823 / NBRC 15573 / CFN 42).